We begin with the raw amino-acid sequence, 307 residues long: Nucleotide-binding protein Acid345_3782 (307 aa).

ATP is bound at residue 31–38; it reads GLSGSGKA. 81–84 contributes to the GTP binding site; the sequence is DIRE.

This sequence belongs to the RapZ-like family.

Its function is as follows. Displays ATPase and GTPase activities. The polypeptide is Nucleotide-binding protein Acid345_3782 (Koribacter versatilis (strain Ellin345)).